We begin with the raw amino-acid sequence, 471 residues long: D-hydantoinase (471 aa).

Positions 58, 60, and 150 each coordinate Zn(2+). At Lys150 the chain carries N6-carboxylysine. Tyr155 provides a ligand contact to substrate. Zn(2+) contacts are provided by His183 and His239. Ser288 contacts substrate. Asp315 contacts Zn(2+). Position 337 (Asn337) interacts with substrate.

The protein belongs to the metallo-dependent hydrolases superfamily. Hydantoinase/dihydropyrimidinase family. In terms of assembly, homotetramer. Zn(2+) serves as cofactor. Ni(2+) is required as a cofactor. The cofactor is Co(2+). Requires Mn(2+) as cofactor. Carboxylation allows a single lysine to coordinate two zinc ions.

Completely inhibited by p-chloromercuribenzoate and partially inhibited by metal chelating agents. In terms of biological role, catalyzes the stereospecific hydrolysis of the cyclic amide bond of D-hydantoin. Has no activity on dihydropyrimidines. This is D-hydantoinase from Geobacillus stearothermophilus (Bacillus stearothermophilus).